Here is a 253-residue protein sequence, read N- to C-terminus: uncharacterized protein (253 aa).

Positions 1 to 15 (MNRVILFHFHFFKNA) are cleaved as a signal peptide.

This is an uncharacterized protein from Archaeoglobus fulgidus (strain ATCC 49558 / DSM 4304 / JCM 9628 / NBRC 100126 / VC-16).